The primary structure comprises 234 residues: FAS1 domain-containing protein AFUA_8G05360 (234 aa).

Positions 1 to 21 (MRRTLFVLFVVAFCFIGSVIA) are cleaved as a signal peptide. Residues 83–231 (KPVVSDVLPK…GELWILNSVL (149 aa)) form the FAS1 domain.

The protein localises to the vacuole. The chain is FAS1 domain-containing protein AFUA_8G05360 from Aspergillus fumigatus (strain ATCC MYA-4609 / CBS 101355 / FGSC A1100 / Af293) (Neosartorya fumigata).